The primary structure comprises 199 residues: Proteasome subunit beta 2 (199 aa).

The propeptide at 1–6 (MEKKTG) is removed in mature form; by autocatalysis. The active-site Nucleophile is Thr7.

It belongs to the peptidase T1B family. The 20S proteasome core is composed of 14 alpha and 14 beta subunits that assemble into four stacked heptameric rings, resulting in a barrel-shaped structure. The two inner rings, each composed of seven catalytic beta subunits, are sandwiched by two outer rings, each composed of seven alpha subunits. The catalytic chamber with the active sites is on the inside of the barrel. Has a gated structure, the ends of the cylinder being occluded by the N-termini of the alpha-subunits. Is capped at one or both ends by the proteasome regulatory ATPase, PAN.

It localises to the cytoplasm. It catalyses the reaction Cleavage of peptide bonds with very broad specificity.. Its activity is regulated as follows. The formation of the proteasomal ATPase PAN-20S proteasome complex, via the docking of the C-termini of PAN into the intersubunit pockets in the alpha-rings, triggers opening of the gate for substrate entry. Interconversion between the open-gate and close-gate conformations leads to a dynamic regulation of the 20S proteasome proteolysis activity. Its function is as follows. Component of the proteasome core, a large protease complex with broad specificity involved in protein degradation. The chain is Proteasome subunit beta 2 from Thermococcus kodakarensis (strain ATCC BAA-918 / JCM 12380 / KOD1) (Pyrococcus kodakaraensis (strain KOD1)).